We begin with the raw amino-acid sequence, 701 residues long: Elongation factor G (701 aa).

In terms of domain architecture, tr-type G spans 10 to 290 (AKVRNIGIMA…AVVDYLPSPL (281 aa)). GTP contacts are provided by residues 19 to 26 (AHIDAGKT), 83 to 87 (DTPGH), and 137 to 140 (NKMD).

The protein belongs to the TRAFAC class translation factor GTPase superfamily. Classic translation factor GTPase family. EF-G/EF-2 subfamily.

The protein localises to the cytoplasm. Functionally, catalyzes the GTP-dependent ribosomal translocation step during translation elongation. During this step, the ribosome changes from the pre-translocational (PRE) to the post-translocational (POST) state as the newly formed A-site-bound peptidyl-tRNA and P-site-bound deacylated tRNA move to the P and E sites, respectively. Catalyzes the coordinated movement of the two tRNA molecules, the mRNA and conformational changes in the ribosome. The sequence is that of Elongation factor G from Tropheryma whipplei (strain Twist) (Whipple's bacillus).